The following is a 68-amino-acid chain: Large ribosomal subunit protein bL35 (68 aa).

2 stretches are compositionally biased toward basic residues: residues 1 to 15 (MPKM…KRFK) and 23 to 38 (TARK…HKSS). The disordered stretch occupies residues 1–38 (MPKMKSHSGTKKRFKVTGSGKVTARKAGKRHLNEHKSS).

The protein belongs to the bacterial ribosomal protein bL35 family.

The polypeptide is Large ribosomal subunit protein bL35 (Cutibacterium acnes (strain DSM 16379 / KPA171202) (Propionibacterium acnes)).